Reading from the N-terminus, the 395-residue chain is FAD-dependent urate hydroxylase (395 aa).

FAD contacts are provided by residues Gly-11, 30–31 (ER), Ser-43, and Met-125. Substrate contacts are provided by residues Asn-180, Arg-206, and 218 to 220 (YFF). FAD-binding positions include Asp-287 and 297 to 301 (GQGGC).

The protein belongs to the FAD-dependent urate hydroxylase family. In terms of assembly, monomer. FAD serves as cofactor.

It catalyses the reaction urate + NADH + O2 + H(+) = 5-hydroxyisourate + NAD(+) + H2O. It participates in purine metabolism; urate degradation. In terms of biological role, catalyzes the hydroxylation of urate to 5-hydroxyisourate (HIU). Is likely to be involved in the urate degradation pathway to allantoin. Prefers NADH over NADPH as the electron donor. The sequence is that of FAD-dependent urate hydroxylase from Mycolicibacterium vanbaalenii (strain DSM 7251 / JCM 13017 / BCRC 16820 / KCTC 9966 / NRRL B-24157 / PYR-1) (Mycobacterium vanbaalenii).